Reading from the N-terminus, the 309-residue chain is Short-chain dehydrogenase/reductase ARMGADRAFT_1018437 (309 aa).

Residues lysine 64, aspartate 86, and asparagine 113 each coordinate NADP(+). Serine 167 (proton donor) is an active-site residue. 2 residues coordinate NADP(+): tyrosine 196 and lysine 200. Tyrosine 196 serves as the catalytic Proton acceptor. Lysine 200 (lowers pKa of active site Tyr) is an active-site residue.

Belongs to the short-chain dehydrogenases/reductases (SDR) family.

It functions in the pathway secondary metabolite biosynthesis. In terms of biological role, short-chain dehydrogenase/reductase, part of the gene cluster that mediates the biosynthesis of melleolides, a range of antifungal and phytotoxic polyketide derivatives composed of an orsellinic acid (OA) moiety esterified to various sesquiterpene alcohols. The first step in melleolides biosynthesis is performed by the delta(6)-protoilludene synthase PRO1 which catalyzes the cyclization of farnesyl diphosphate to protoilludene. The orsellinic acid synthase armB produces OA by condensing acetyl-CoA with 3 malonyl-CoA units in a three-round chain elongation reaction folowed by a C2-C7 ring closure. ArmB further catalyzes the trans-esterification of OA to the various sesquiterpene alcohols resulting from the hydroxylation of protoilludene. The melleolides cluster also includes 5 cytochrome P450 monooxygenases, 4 NAD(+)-dependent oxidoreductases, one flavin-dependent oxidoreductase, and one O-methyltransferase. The cytochrome P450 monooxygenases may be involved in protoilludene hydroxylation to elaborate melleolides with multiple alcohol groups, such as melleolide D, which carries alcohol functionalities at C-4, C-5, C-10, and C-13. The role of the NAD(+)-dependent enzymes remains unknown. Numerous melleolides, including arnamial, show 5'-O-methylation of the aromatic moiety which may be catalyzed by the methyltransferase encoded in the cluster. The flavin-dependent oxidoreductase might represent the dehydrogenase yielding the aldehyde in position 1 of arnamial and other melleolides. Finally, several halogenase localized outside of the cluster, are able to catalyze the transfer of a single chlorine atom to the melleolide backbone, resulting in a 6'-chloromelleolide product. The protein is Short-chain dehydrogenase/reductase ARMGADRAFT_1018437 of Armillaria gallica (Bulbous honey fungus).